Reading from the N-terminus, the 155-residue chain is uncharacterized protein (155 aa).

Over residues 1 to 14 (MLTLSGWITTQVPP) the composition is skewed to polar residues. Residues 1–44 (MLTLSGWITTQVPPSSRAAADAKAARTGTAEQAEDPAAGTDAAD) are disordered. The segment covering 17–30 (RAAADAKAARTGTA) has biased composition (low complexity).

This is an uncharacterized protein from Pseudomonas aeruginosa (strain ATCC 15692 / DSM 22644 / CIP 104116 / JCM 14847 / LMG 12228 / 1C / PRS 101 / PAO1).